A 284-amino-acid chain; its full sequence is Quinate/shikimate dehydrogenase (NAD(+)) (284 aa).

Positions 18 and 70 each coordinate shikimate. Residues 18–20 (SRT) and Thr-70 each bind L-quinate. Tyr-73 functions as the Proton acceptor in the catalytic mechanism. Lys-74, Asn-95, and Asp-111 together coordinate shikimate. Lys-74, Asn-95, and Asp-111 together coordinate L-quinate. NAD(+)-binding positions include 137–138 (GG), Asp-159, Arg-164, 203–206 (TPMG), Ala-214, Val-229, and Gly-252. Residue Gln-259 coordinates shikimate. Residue Gln-259 coordinates L-quinate.

The protein belongs to the shikimate dehydrogenase family. In terms of assembly, homodimer.

It carries out the reaction L-quinate + NAD(+) = 3-dehydroquinate + NADH + H(+). The catalysed reaction is shikimate + NAD(+) = 3-dehydroshikimate + NADH + H(+). It participates in metabolic intermediate biosynthesis; chorismate biosynthesis; chorismate from D-erythrose 4-phosphate and phosphoenolpyruvate: step 4/7. It functions in the pathway aromatic compound metabolism; 3,4-dihydroxybenzoate biosynthesis; 3-dehydroquinate from D-quinate (NAD(+) route). Its function is as follows. Involved in the biosynthesis of the chorismate, which leads to the biosynthesis of aromatic amino acids, and plays a key role in the quinate degradation pathway. Catalyzes the NAD(+)-dependent oxidation of both quinate and shikimate to 3-dehydroquinate and 3-dehydroshikimate, respectively. It can only use NAD. The chain is Quinate/shikimate dehydrogenase (NAD(+)) from Corynebacterium efficiens (strain DSM 44549 / YS-314 / AJ 12310 / JCM 11189 / NBRC 100395).